A 141-amino-acid polypeptide reads, in one-letter code: Hemoglobin subunit alpha-1 (141 aa).

In terms of domain architecture, Globin spans 1–141 (VLSGSDKNNV…VGNVLTAKYR (141 aa)). Histidine 58 is a binding site for O2. Heme b is bound at residue histidine 87.

The protein belongs to the globin family. In terms of assembly, heterotetramer of two alpha chains and two beta chains. In terms of tissue distribution, red blood cells.

In terms of biological role, involved in oxygen transport from the lung to the various peripheral tissues. The polypeptide is Hemoglobin subunit alpha-1 (Stercorarius maccormicki (South polar skua)).